Reading from the N-terminus, the 420-residue chain is DNA primase small subunit (420 aa).

An N-acetylmethionine modification is found at Met1. Active-site residues include Glu44, Asp109, and Asp111. The Mg(2+) site is built by Asp109 and Asp111. Mn(2+) contacts are provided by Asp109 and Asp111. 109–111 (DID) lines the a ribonucleoside 5'-triphosphate pocket. Zn(2+) is bound by residues Cys121, Cys122, Cys128, and Cys131. A Zinc knuckle motif motif is present at residues 121 to 131 (CCSSADICPKC). 160–166 (SGRRGVH) contributes to the a ribonucleoside 5'-triphosphate binding site. A Mg(2+)-binding site is contributed by Asp306. Asp306 serves as a coordination point for Mn(2+). Residues 315–318 (HLLK) and His324 each bind a ribonucleoside 5'-triphosphate. Acidic residues predominate over residues 363–373 (NEEEKEENEAE). A disordered region spans residues 363 to 382 (NEEEKEENEAESDVKHRTRD).

Belongs to the eukaryotic-type primase small subunit family. In terms of assembly, heterodimer of a catalytic subunit PRIM1 and a regulatory subunit PRIM2, also known as the DNA primase complex. Interacts with PRIM2 (via C-terminus). Component of the alpha DNA polymerase complex (also known as the alpha DNA polymerase-primase complex) consisting of four subunits: the catalytic subunit POLA1, the regulatory subunit POLA2, and the primase complex subunits PRIM1 and PRIM2 respectively. Within the complex, POLA1 directly interacts with PRIM2. It depends on Mg(2+) as a cofactor. Mn(2+) serves as cofactor.

It catalyses the reaction ssDNA + n NTP = ssDNA/pppN(pN)n-1 hybrid + (n-1) diphosphate.. The presence of the regulatory subunit PRIM2/p58 accelerates the kinetics of initiation and primer extension. Inhibited by arabinose nucleoside derivatives such as fludarabine and vidarabine. Functionally, catalytic subunit of the DNA primase complex and component of the DNA polymerase alpha complex (also known as the alpha DNA polymerase-primase complex - primosome/replisome) which play an essential role in the initiation of DNA synthesis. During the S phase of the cell cycle, the DNA polymerase alpha complex (composed of a catalytic subunit POLA1, an accessory subunit POLA2 and two primase subunits, the catalytic subunit PRIM1 and the regulatory subunit PRIM2) is recruited to DNA at the replicative forks via direct interactions with MCM10 and WDHD1. The primase subunit of the polymerase alpha complex initiates DNA synthesis by oligomerising short RNA primers on both leading and lagging strands. These primers are initially extended by the polymerase alpha catalytic subunit and subsequently transferred to polymerase delta and polymerase epsilon for processive synthesis on the lagging and leading strand, respectively. In the primase complex, both subunits are necessary for the initial di-nucleotide formation, but the extension of the primer depends only on the catalytic subunit. Synthesizes 9-mer RNA primers (also known as the 'unit length' RNA primers). Incorporates only ribonucleotides in the presence of ribo- and deoxy-nucleotide triphosphates (rNTPs, dNTPs). Requires template thymine or cytidine to start the RNA primer synthesis, with an adenine or guanine at its 5'-end. Binds single stranded DNA. The chain is DNA primase small subunit (PRIM1) from Homo sapiens (Human).